We begin with the raw amino-acid sequence, 171 residues long: Co-chaperone protein HscB homolog (171 aa).

The 73-residue stretch at 2 to 74 folds into the J domain; sequence NYFELFGLPI…LRRAEYLLSL (73 aa).

Belongs to the HscB family. As to quaternary structure, interacts with HscA and stimulates its ATPase activity.

In terms of biological role, co-chaperone involved in the maturation of iron-sulfur cluster-containing proteins. Seems to help targeting proteins to be folded toward HscA. This chain is Co-chaperone protein HscB homolog, found in Vibrio cholerae serotype O1 (strain ATCC 39541 / Classical Ogawa 395 / O395).